The sequence spans 33 residues: pyr operon leader peptide (33 aa).

The chain is pyr operon leader peptide (pyrL) from Salmonella typhi.